The sequence spans 85 residues: Small ribosomal subunit protein uS17 (85 aa).

It belongs to the universal ribosomal protein uS17 family. In terms of assembly, part of the 30S ribosomal subunit.

Its function is as follows. One of the primary rRNA binding proteins, it binds specifically to the 5'-end of 16S ribosomal RNA. The chain is Small ribosomal subunit protein uS17 from Desulfosudis oleivorans (strain DSM 6200 / JCM 39069 / Hxd3) (Desulfococcus oleovorans).